Reading from the N-terminus, the 1170-residue chain is Thrombospondin-1 (1170 aa).

The N-terminal stretch at methionine 1–threonine 18 is a signal peptide. A heparin-binding region spans residues arginine 47–arginine 95. The Laminin G-like domain occupies asparagine 65–cysteine 270. An intrachain disulfide couples cysteine 171 to cysteine 232. 2 N-linked (GlcNAc...) asparagine glycosylation sites follow: asparagine 248 and asparagine 360. The VWFC domain maps to proline 316 to tryptophan 373. TSP type-1 domains follow at residues aspartate 379–aspartate 429, aspartate 435–proline 490, and asparagine 492–proline 547. Tryptophan 385 is a glycosylation site (C-linked (Man) tryptophan). Cystine bridges form between cysteine 391-cysteine 423, cysteine 395-cysteine 428, and cysteine 406-cysteine 413. The O-linked (Fuc...) serine glycan is linked to serine 394. 2 C-linked (Man) tryptophan glycosylation sites follow: tryptophan 438 and tryptophan 441. Disulfide bonds link cysteine 447–cysteine 484, cysteine 451–cysteine 489, and cysteine 462–cysteine 474. O-linked (Fuc...) threonine glycosylation occurs at threonine 450. Tryptophan 498 is a glycosylation site (C-linked (Man) tryptophan). Intrachain disulfides connect cysteine 504-cysteine 541, cysteine 508-cysteine 546, cysteine 519-cysteine 531, cysteine 551-cysteine 562, cysteine 556-cysteine 572, cysteine 575-cysteine 586, cysteine 592-cysteine 608, cysteine 599-cysteine 617, cysteine 620-cysteine 644, cysteine 650-cysteine 663, cysteine 657-cysteine 676, cysteine 678-cysteine 689, cysteine 705-cysteine 713, cysteine 718-cysteine 738, cysteine 754-cysteine 774, cysteine 777-cysteine 797, cysteine 813-cysteine 833, cysteine 836-cysteine 856, cysteine 874-cysteine 894, cysteine 910-cysteine 930, and cysteine 946-cysteine 1167. O-linked (Fuc...) threonine glycosylation occurs at threonine 507. Residues cysteine 531 to valine 1152 form an involved in retention in extracellular matrix (ECM); involved in trimer formation region. Residues proline 547 to threonine 587 form the EGF-like 1 domain. The O-linked (Xyl) serine glycan is linked to serine 553. Residues proline 646–glycine 690 form the EGF-like 2 domain. 8 TSP type-3 repeats span residues glutamate 691–glutamine 726, glutamate 727–glutamine 762, tyrosine 763–glutamine 785, alanine 786–glutamine 821, arginine 822–glutamine 844, leucine 845–glutamine 882, alanine 883–glutamine 918, and lysine 919–glutamate 954. A glycan (N-linked (GlcNAc...) asparagine) is linked at asparagine 708. A disordered region spans residues glutamate 839–phenylalanine 934. Composition is skewed to basic and acidic residues over residues histidine 840–aspartate 854, alanine 883–cysteine 894, and aspartate 917–phenylalanine 934. Positions arginine 926–aspartate 928 match the Cell attachment site motif. Positions arginine 958–proline 1170 constitute a TSP C-terminal domain. Asparagine 1067 carries N-linked (GlcNAc...) asparagine glycosylation.

It belongs to the thrombospondin family. As to quaternary structure, homotrimer; disulfide-linked. Can bind to fibrinogen, fibronectin, laminin, type V collagen and integrins alpha-V/beta-1, alpha-V/beta-3 and alpha-IIb/beta-3. Binds heparin. Interacts (via the C-terminal domain) with CD47. Interacts (via the TSP type I repeats) with CD36; the interaction conveys an antiangiogenic effect. Interacts (via the TSP type I repeats) with HRG; the interaction blocks the antiangiogenic effect of THBS1 with CD36. Interacts with ATF6 (via lumenal domain). Interacts with FN1; this interaction is enhanced by TNFAIP6, which may act as a bridging molecule between FN1 and THBS1. Interacts with SIRPA; the interaction stimulates phosphorylation of SIRPA. Expressed by platelets (at protein level). Expressed by monocyte-derived immature and mature dendritic cells (at protein level).

It is found in the secreted. It localises to the cell surface. Its subcellular location is the extracellular space. The protein resides in the extracellular matrix. The protein localises to the endoplasmic reticulum. It is found in the sarcoplasmic reticulum. In terms of biological role, adhesive glycoprotein that mediates cell-to-cell and cell-to-matrix interactions. Multifunctional, involved in inflammation, angiogenesis, wound healing, reactive oxygen species (ROS) signaling, nitrous oxide (NO) signaling, apoptosis, senescence, aging, cellular self-renewal, stemness, and cardiovascular and metabolic homeostasis. Negatively modulates dendritic cell activation and cytokine release, as part of an autocrine feedback loop, contributing to the resolution of inflammation and immune homeostasis. Ligand for receptor CD47. Modulates nitrous oxide (NO) signaling via CD47, hence playing a role as a pressor agent, supporting blood pressure. Plays a role in endothelial cell senescence, acting via CD47, by increasing the abundance and activation of NADPH oxidase NOX1, and so generating excess ROS. Inhibits stem cell self-renewal, acting via CD47 signaling, probably by regulation of the stem cell transcription factors POU5F1/OCT4, SOX2, MYC/c-Myc and KLF4. Negatively modulates wound healing, acting via CD47. Ligand for receptor CD36. Involved in inducing apoptosis in podocytes in response to elevated free fatty acids, acting via CD36. Plays a role in suppressing angiogenesis, acting, depending on context, via CD36 or CD47. Promotes cellular senescence in a TP53-CDKN1A-RB1 signaling-dependent manner. Ligand for immunoglobulin-like cell surface receptor SIRPA. Involved in ROS signaling in non-phagocytic cells, stimulating NADPH oxidase-derived ROS production, acting via interaction with SIRPA. Plays a role in metabolic dysfunction in diet-induced obesity, perhaps acting by exacerbating adipose inflammatory activity; its effects may be mediated, at least in part, through enhanced adipocyte proliferation. Plays a role in ER stress response, via its interaction with the activating transcription factor 6 alpha (ATF6) which produces adaptive ER stress response factors. May be involved in age-related conditions, including metabolic dysregulation, during normal aging. The polypeptide is Thrombospondin-1 (Homo sapiens (Human)).